A 433-amino-acid polypeptide reads, in one-letter code: Enolase (433 aa).

Q166 provides a ligand contact to (2R)-2-phosphoglycerate. E208 functions as the Proton donor in the catalytic mechanism. Positions 245, 289, and 316 each coordinate Mg(2+). (2R)-2-phosphoglycerate-binding residues include K341, R370, S371, and K392. K341 (proton acceptor) is an active-site residue.

It belongs to the enolase family. Mg(2+) serves as cofactor.

Its subcellular location is the cytoplasm. It localises to the secreted. The protein localises to the cell surface. It carries out the reaction (2R)-2-phosphoglycerate = phosphoenolpyruvate + H2O. The protein operates within carbohydrate degradation; glycolysis; pyruvate from D-glyceraldehyde 3-phosphate: step 4/5. In terms of biological role, catalyzes the reversible conversion of 2-phosphoglycerate (2-PG) into phosphoenolpyruvate (PEP). It is essential for the degradation of carbohydrates via glycolysis. In Acetivibrio thermocellus (strain ATCC 27405 / DSM 1237 / JCM 9322 / NBRC 103400 / NCIMB 10682 / NRRL B-4536 / VPI 7372) (Clostridium thermocellum), this protein is Enolase.